The primary structure comprises 666 residues: DNA mismatch repair protein MutL (666 aa).

It belongs to the DNA mismatch repair MutL/HexB family.

This protein is involved in the repair of mismatches in DNA. It is required for dam-dependent methyl-directed DNA mismatch repair. May act as a 'molecular matchmaker', a protein that promotes the formation of a stable complex between two or more DNA-binding proteins in an ATP-dependent manner without itself being part of a final effector complex. The protein is DNA mismatch repair protein MutL of Clostridium botulinum (strain Okra / Type B1).